Here is a 434-residue protein sequence, read N- to C-terminus: Methylenetetrahydrofolate--tRNA-(uracil-5-)-methyltransferase TrmFO (434 aa).

An FAD-binding site is contributed by 10–15; sequence GAGLAG.

This sequence belongs to the MnmG family. TrmFO subfamily. FAD is required as a cofactor.

It localises to the cytoplasm. It carries out the reaction uridine(54) in tRNA + (6R)-5,10-methylene-5,6,7,8-tetrahydrofolate + NADH + H(+) = 5-methyluridine(54) in tRNA + (6S)-5,6,7,8-tetrahydrofolate + NAD(+). It catalyses the reaction uridine(54) in tRNA + (6R)-5,10-methylene-5,6,7,8-tetrahydrofolate + NADPH + H(+) = 5-methyluridine(54) in tRNA + (6S)-5,6,7,8-tetrahydrofolate + NADP(+). Catalyzes the folate-dependent formation of 5-methyl-uridine at position 54 (M-5-U54) in all tRNAs. In Bacillus cytotoxicus (strain DSM 22905 / CIP 110041 / 391-98 / NVH 391-98), this protein is Methylenetetrahydrofolate--tRNA-(uracil-5-)-methyltransferase TrmFO.